We begin with the raw amino-acid sequence, 598 residues long: MGIPADNLQSRAKASFDTRVSAAELALARGVVPSLANGEELLYRNPDPENGDPSFIVSFTKGLPHDDNGAIIDPDDFLAFVRAINSGDEKEIADLTLGPARDPDTGLPIWRSDLANSLELEVRGWENSSAGLTFDLEGPDAQSIAMPPAPVLTSPELIAEIAELYLMALGREIEFSEFDSPKNAEYIQFAIDQLNGLEWFNTPAMLGDPPAEIRRRRGEVTVGNLFRGILPGSEVGPYLSQYIIVGSKQIGSATGGNKTLVSPNAADEFDGEIAYGSITISQRVRIATPGRDFMTDLKVFLDVQDAADFRGFESYEPGARLIRTIRDLATWVHFDALYEAYLNACLILLANRVPFDPNIPFQQEDKLDNQDVFVNFGDAHVLSLVTEVATRALKAVRYQKFNIHRRLRPEATGGLISVNKIAAEKGESVFPEVDLAVEELEDILEKAEISNRKQNIADGDPDPDPSFLLPQAFAEGSPFHPSYGSGHAVVAGACVTILKAFFDSNFQIDQVFEVDKDEDKLVKSSFKGTLTVAGELNKLADNIAIGRNMAGVHYFSDQFESILLGEQVAIGILEEQSLTYGENFFFNLPKFDGTTIQI.

Residues Phe361, Gln363, Asp365, Asp368, and Gln370 each contribute to the Ca(2+) site. Positions 400 and 408 each coordinate vanadate. His480 is a catalytic residue. Residues Ser485, Gly486, His487, Arg547, and His553 each contribute to the vanadate site. Residue His487 is part of the active site.

Belongs to the vanadium-dependent haloperoxidase family. Homododecamer. Ca(2+) is required as a cofactor. It depends on vanadate as a cofactor.

The enzyme catalyses RH + Br(-) + H2O2 = RBr + 2 H2O.. Functionally, catalyzes the halogenation of organic substrates in the presence of hydrogen peroxide. This Corallina officinalis (Coral seaweed) protein is Vanadium-dependent bromoperoxidase.